A 569-amino-acid chain; its full sequence is Anti-Muellerian hormone type-2 receptor (569 aa).

An N-terminal signal peptide occupies residues 1 to 17 (MLGTLGLWALLPAAVQA). Topologically, residues 18-148 (PPNRRTCVFF…AAPGESPWMA (131 aa)) are extracellular. Disulfide bonds link Cys55-Cys79 and Cys92-Cys109. N-linked (GlcNAc...) asparagine glycosylation is present at Asn66. Residue Asn119 is glycosylated (N-linked (GlcNAc...) asparagine). Residues 149–169 (LALLGLVLLLLLLLGGIVVAL) form a helical membrane-spanning segment. The Cytoplasmic portion of the chain corresponds to 170-569 (LQRKAYRVQS…PGAACASSDV (400 aa)). Residues 201-511 (LCFSQVIREG…RLVALVHPQE (311 aa)) enclose the Protein kinase domain. ATP-binding positions include 207-215 (IREGGHAAV) and Lys228. Residue Asp331 is the Proton acceptor of the active site. The segment at 512–535 (AQPCPEGRPHSHPEDWPPAPAPAP) is disordered.

It belongs to the protein kinase superfamily. TKL Ser/Thr protein kinase family. TGFB receptor subfamily. As to quaternary structure, interacts with type I receptor ACVR1. It depends on Mg(2+) as a cofactor. Mn(2+) is required as a cofactor.

Its subcellular location is the membrane. The catalysed reaction is L-threonyl-[receptor-protein] + ATP = O-phospho-L-threonyl-[receptor-protein] + ADP + H(+). It catalyses the reaction L-seryl-[receptor-protein] + ATP = O-phospho-L-seryl-[receptor-protein] + ADP + H(+). On ligand binding, forms a receptor complex consisting of two type II and two type I transmembrane serine/threonine kinases. Type II receptors phosphorylate and activate type I receptors which autophosphorylate, then bind and activate SMAD transcriptional regulators. Receptor for anti-Muellerian hormone. The chain is Anti-Muellerian hormone type-2 receptor (AMHR2) from Oryctolagus cuniculus (Rabbit).